We begin with the raw amino-acid sequence, 717 residues long: MDKDAKNLTALEAERELEWLAKEIARHDVLYNNHDQPEISDARYDALRRRNIEIETLFPELVRADSPSYKVGAPISERFEKSVHAQAMLSLDNAFSSEDVHEFVERVRRFLRLPVTKTLEMTAEPKIDGLSLSLRYEKGKLVCAATRGDGYVGENVTVNARTLSDIPQVLQGDFPDILEVRGEVYMRHSDFQDLNVDQQEKGKLVFANPRNAAAGSLRQLDTRMTARRKLKFFAYGWGEVSEMPAKSQMEMVKKLKEYGFVINPLTKVFKAVEDLISYYHFIEEGRQHLDYDIDGVVYKVNDLLLQTRLGNVSRSPRWAIAHKFPAEKAMALLENIDIQIGRTGALTPVARLAPITVGGVVVTNASLHNEDYIKGLGSKSESIREGRDIRIGDTVIVQRAGDVIPQIIDVIIEKRPKGASPFVFPSLCPACGSHAVREVGEAVRRCTGGLICPAQAIERIRHFVSRNAFDIEGLGEKQVEFFFHAQDETLRIHSPADIFTLQKRQEKSLTRLENMEGFGTLSVRKLYDAINARRKIPLSRFLFALGIRHVGEVNARRLARAYQNYNAFETVAMTALMPCNKEDKGNEEWLELTSIEGIGVRVGKAIIDFYQETHNRDVLSSLLQEVTPLPEEAAVADYSPVAGKTIVFTGTLVHMSRDEVKALAERLGAKASSSISKKTDLLVAGIGAGSKLTKAKELGIEIMDEESWLQLINEHHI.

NAD(+) is bound by residues 41–45, 90–91, and E124; these read DARYD and SL. The N6-AMP-lysine intermediate role is filled by K126. Residues R147, E183, K299, and K323 each contribute to the NAD(+) site. Positions 428, 431, 446, and 452 each coordinate Zn(2+). A BRCT domain is found at 636-717; that stretch reads ADYSPVAGKT…WLQLINEHHI (82 aa).

The protein belongs to the NAD-dependent DNA ligase family. LigA subfamily. It depends on Mg(2+) as a cofactor. Mn(2+) is required as a cofactor.

It carries out the reaction NAD(+) + (deoxyribonucleotide)n-3'-hydroxyl + 5'-phospho-(deoxyribonucleotide)m = (deoxyribonucleotide)n+m + AMP + beta-nicotinamide D-nucleotide.. Functionally, DNA ligase that catalyzes the formation of phosphodiester linkages between 5'-phosphoryl and 3'-hydroxyl groups in double-stranded DNA using NAD as a coenzyme and as the energy source for the reaction. It is essential for DNA replication and repair of damaged DNA. The polypeptide is DNA ligase (Bartonella bacilliformis (strain ATCC 35685 / KC583 / Herrer 020/F12,63)).